The following is a 791-amino-acid chain: Major facilitator superfamily domain-containing protein 6 (791 aa).

Position 2 is an N-acetylalanine (alanine 2). Phosphothreonine is present on threonine 10. Residues 22-47 are disordered; the sequence is LADPFNGISREPEPPSNETPSSTETS. The segment covering 37–47 has biased composition (low complexity); that stretch reads SNETPSSTETS. 6 helical membrane passes run 73 to 93, 105 to 125, 132 to 152, 286 to 306, 335 to 355, and 369 to 389; these read VFYF…PVYY, LLVG…GVVA, KIVL…IGFV, AIFL…ASSV, WGLA…EVLI, and QIVF…ATQF. The segment at 407-427 is disordered; sequence EIPQVERNNSTESSEETPTTT. The span at 416-427 shows a compositional bias: low complexity; that stretch reads STESSEETPTTT. A run of 6 helical transmembrane segments spans residues 450–470, 479–499, 507–527, 544–564, 579–599, and 605–625; these read VLFV…FLYW, TTLF…AYFF, IGHI…YIYI, GVTH…AVPP, LGLG…YFGA, and GIGM…WLAV. Disordered stretches follow at residues 662 to 687 and 723 to 791; these read MPRI…NKPA and LQGT…AGGH. The segment covering 750 to 768 has biased composition (polar residues); that stretch reads SRNQPSPDAAASQTQTSPA. The span at 782-791 shows a compositional bias: low complexity; it reads QQAQLAAGGH.

The protein belongs to the major facilitator superfamily. MFSD6 family. In terms of assembly, may interact with HLA-B62. In terms of tissue distribution, widely expressed. Expression levels in peripheral blood mononuclear cells are highly variable between individuals, including no expression at all.

It localises to the membrane. The polypeptide is Major facilitator superfamily domain-containing protein 6 (MFSD6) (Homo sapiens (Human)).